The primary structure comprises 295 residues: Putative F-box protein At5g44220 (295 aa).

The F-box domain occupies 56–102; sequence STNSDLLPMDLIKEILKRLPAKTLARFLCVSKLWSSIIRSRDLMKLF.

The protein is Putative F-box protein At5g44220 of Arabidopsis thaliana (Mouse-ear cress).